Consider the following 298-residue polypeptide: DNA-3-methyladenine glycosylase (298 aa).

Residues 1 to 17 (MVTPALQMKKPKQFCRR) constitute a mitochondrion transit peptide. The segment at 1–65 (MVTPALQMKK…CPRERCLGPP (65 aa)) is disordered. Basic residues predominate over residues 9-25 (KKPKQFCRRMGQKKQRP). Phosphoserine is present on residues serine 78 and serine 252.

It belongs to the DNA glycosylase MPG family. As to quaternary structure, binds MBD1. Binds SSBP1.

It localises to the cytoplasm. It is found in the mitochondrion matrix. The protein resides in the mitochondrion nucleoid. The protein localises to the nucleus. It catalyses the reaction Hydrolysis of alkylated DNA, releasing 3-methyladenine, 3-methylguanine, 7-methylguanine and 7-methyladenine.. Its activity is regulated as follows. Binding to SSBP1 in mitochondria inhibits glycosylase activity in the context of a single-stranded DNA (ssDNA), but not a double-stranded DNA (dsDNA) substrates. In terms of biological role, hydrolysis of the deoxyribose N-glycosidic bond to excise 3-methyladenine, and 7-methylguanine from the damaged DNA polymer formed by alkylation lesions. This chain is DNA-3-methyladenine glycosylase (MPG), found in Homo sapiens (Human).